The chain runs to 280 residues: F420-dependent methylenetetrahydromethanopterin dehydrogenase (280 aa).

The protein belongs to the MTD family.

The catalysed reaction is 5,10-methylenetetrahydromethanopterin + oxidized coenzyme F420-(gamma-L-Glu)(n) + 2 H(+) = 5,10-methenyl-5,6,7,8-tetrahydromethanopterin + reduced coenzyme F420-(gamma-L-Glu)(n). It functions in the pathway one-carbon metabolism; methanogenesis from CO(2); 5,10-methylene-5,6,7,8-tetrahydromethanopterin from 5,10-methenyl-5,6,7,8-tetrahydromethanopterin (coenzyme F420 route): step 1/1. In terms of biological role, catalyzes the reversible reduction of methenyl-H(4)MPT(+) to methylene-H(4)MPT. In Methanospirillum hungatei JF-1 (strain ATCC 27890 / DSM 864 / NBRC 100397 / JF-1), this protein is F420-dependent methylenetetrahydromethanopterin dehydrogenase.